The chain runs to 412 residues: AA9 family lytic polysaccharide monooxygenase A (412 aa).

The N-terminal stretch at 1 to 20 (MKTTTYSLLALAAASKLASA) is a signal peptide. Residues H21 and H103 each coordinate Cu(2+). Residues C63 and C186 are joined by a disulfide bond. An N-linked (GlcNAc...) asparagine glycan is attached at N151. O2 is bound at residue H172. Y183 serves as a coordination point for Cu(2+). 2 N-linked (GlcNAc...) asparagine glycosylation sites follow: N334 and N385. Positions 373–409 (GVAKMYERCGGINHTGPTTCESGSVCKKWNPYYYQCV) constitute a CBM1 domain.

This sequence belongs to the polysaccharide monooxygenase AA9 family. Requires Cu(2+) as cofactor.

Its subcellular location is the secreted. It carries out the reaction [(1-&gt;4)-beta-D-glucosyl]n+m + reduced acceptor + O2 = 4-dehydro-beta-D-glucosyl-[(1-&gt;4)-beta-D-glucosyl]n-1 + [(1-&gt;4)-beta-D-glucosyl]m + acceptor + H2O.. Functionally, lytic polysaccharide monooxygenase (LPMO) that depolymerizes crystalline and amorphous polysaccharides via the oxidation of scissile alpha- or beta-(1-4)-glycosidic bonds, yielding C4 oxidation products. Catalysis by LPMOs requires the reduction of the active-site copper from Cu(II) to Cu(I) by a reducing agent and H(2)O(2) or O(2) as a cosubstrate. The protein is AA9 family lytic polysaccharide monooxygenase A (eglD) of Aspergillus niger (strain ATCC MYA-4892 / CBS 513.88 / FGSC A1513).